The following is a 3323-amino-acid chain: Mucin-3A (3323 aa).

Residues 1–15 (MQLLGLLGLLWMLKA) form the signal peptide. 15 disordered regions span residues 218-243 (TISSTTRTTERTPLPTGSIHTTTSPT), 270-289 (TSMTTTASQPTATNTLSSPT), 325-345 (ISRSTPTSETTYTTSPTSTVT), 359-380 (GTLSTETSLPPTSSSLPTTETA), 539-677 (MSAS…PSTE), 700-722 (NASSMTTSETTYPNSPTGPGTNS), 734-756 (ETSSTATSLPPTSPLVSTAKTAK), 909-991 (SFSS…TLTP), 1170-1201 (ISSASPTSGTMVTSTTMTPSSLSTDTPSTTPT), 1318-1356 (AESALAPTTTTSFTTSPTMEPPSTTVATTGTGQTTFPSS), 1380-1442 (AMTS…TNPV), 1484-1509 (TMTETSSTATSLPPTSSLVSTAETAK), 1714-1746 (TPSSTVATTGTGQTTFTSSTATSPKTTTLTPTS), 1793-1844 (FTSS…YPTS), and 1900-2056 (TSHS…SHST). Low complexity predominate over residues 270–284 (TSMTTTASQPTATNT). A compositionally biased stretch (polar residues) spans 545-563 (GTTHTESISSPPASTSTLH). Residues 564-618 (TTAESTLAPTTTTSFTTSTTMEPPSTTAATTGTGQTTFTSSTATFPETTTPTPTT) are compositionally biased toward low complexity. Over residues 619–629 (DMSTESLTTAM) the composition is skewed to polar residues. The segment covering 630-676 (TSPPITSSVTSTNTVTSMTTTTSPPTTTNSFTSLTSMPLSSTPVPST) has biased composition (low complexity). Over residues 700–721 (NASSMTTSETTYPNSPTGPGTN) the composition is skewed to polar residues. The segment covering 909–918 (SFSSSMSESS) has biased composition (low complexity). Residues 919–932 (AGTTHTESISSPRG) show a composition bias toward polar residues. Low complexity predominate over residues 933-991 (TTSTLHTTVESTPSPTTTTSFTTSTMMEPPSSTVSTTGRGQTTFPSSTATFPETTTLTP). Low complexity predominate over residues 1324–1356 (PTTTTSFTTSPTMEPPSTTVATTGTGQTTFPSS). Tandem repeats lie at residues 1893-1910 (VTTTTKITSHSTPSFTSS), 1911-1927 (IATTETPSHSTPRFTSS), 1928-1944 (ITTTETPSHSTPRFTSS), 1945-1961 (ITNTKTTSHSSPSFTSS), 1962-1978 (ITTTETTSHNTPSLTSS), 1979-1995 (ITTTKTTSHSTPSYTSL), 1996-2012 (ITTTTTTSHSTPSFTSS), 2013-2029 (ITTTETTSHNTPSLTSS), 2030-2046 (ITTTETTSHSTPSFTSS), 2047-2062 (ITTETTSHSTPSFTSL), 2063-2079 (ITITEITSHSTLSYTTS), 2080-2096 (ITTTETPSHSTLSFTSS), 2097-2113 (ITTTETTSHSTPSFTSS), 2114-2130 (ITTSEMPSHSTPSFTSS), 2131-2147 (ITTTENATHSTPNFTSS), 2148-2164 (ITTTETTSHSTPSFTSL), 2165-2191 (ITTTETTSHRWGTTETTSYSTPSFTSS), 2192-2208 (NTITETTSHSTPSYITS), 2209-2225 (ITTTETPSSSTPSFSSS), 2226-2242 (ITTTETTSHSTPGFTSS), 2243-2259 (ITTTETTSHSTPSFTSS), 2260-2276 (ITTTETTSHDTPSFTSS), 2277-2293 (ITTSETPSHSTPSSTSL), 2294-2310 (ITTTKTTSHSTPSFTSS), 2311-2327 (ITTTETTSHSAHSFTSS), 2328-2344 (ITTTETTSHNTRSFTSS), 2345-2361 (ITTTETNSHSTTSFTSS), 2362-2378 (ITTTETTSHSTPSFSSS), 2379-2395 (ITTTETPLHSTPGLTSW), 2396-2412 (VTTTKTTSHITPGLTSS), 2413-2429 (ITTTETTSHSTPGFTSS), and 2430-2446 (ITTTETTSESTPSLSSS). Positions 1893-2446 (VTTTTKITSH…SESTPSLSSS (554 aa)) are 32 X approximate tandem repeats, Ser/Thr-rich. The span at 1907-1947 (FTSSIATTETPSHSTPRFTSSITTTETPSHSTPRFTSSITN) shows a compositional bias: polar residues. The segment covering 1948 to 2056 (TKTTSHSSPS…ITTETTSHST (109 aa)) has biased composition (low complexity). Low complexity-rich tracts occupy residues 2100 to 2170 (TETT…TTET), 2177 to 2384 (TTET…TTET), 2393 to 2447 (TSWV…SSST), and 2464 to 2507 (TTSE…TTTT). Disordered stretches follow at residues 2100–2447 (TETT…SSST), 2464–2508 (TTSE…TTTD), 2578–2608 (TQTPPVLTSATGTQTSPAPTTVTFGSTDSST), 2631–2656 (IPSTHSSTLQTTPSTPSLQTSLTSTS), 2834–2858 (MMPESESSISPNASSSTGTGTVPTN), and 2897–2937 (SSLP…TSRR). Residues 2578–2602 (TQTPPVLTSATGTQTSPAPTTVTFG) show a composition bias toward polar residues. Composition is skewed to low complexity over residues 2633–2656 (STHSSTLQTTPSTPSLQTSLTSTS), 2834–2849 (MMPESESSISPNASSS), and 2905–2937 (TSSKSTHPSPPTTRTSETPVATTQTPTTLTSRR). Positions 2976-3009 (SGDRCQLQTRCQNGGQWDGLKCQCPSTFYGSSCE) constitute an EGF-like domain. 2 disulfides stabilise this stretch: Cys2980–Cys2986 and Cys2999–Cys3008. In terms of domain architecture, SEA spans 3018 to 3143 (DVVETEVGME…DSIKVNNNSK (126 aa)). Residues 3227 to 3247 (LVGGLTAGAALLVLLLLALGV) form a helical membrane-spanning segment.

Highly O-glycosylated and probably also N-glycosylated. In terms of tissue distribution, broad specificity; small intestine, colon, colonic tumors, heart, liver, thymus, prostate, pancreas and gall bladder.

The protein resides in the membrane. It localises to the secreted. Its function is as follows. Major glycoprotein component of a variety of mucus gels. Thought to provide a protective, lubricating barrier against particles and infectious agents at mucosal surfaces. May be involved in ligand binding and intracellular signaling. This is Mucin-3A from Homo sapiens (Human).